The sequence spans 366 residues: tRNA-specific 2-thiouridylase MnmA (366 aa).

ATP contacts are provided by residues 6–13 (AMSGGVDS) and Leu32. Cys101 acts as the Nucleophile in catalysis. Cys101 and Cys197 are disulfide-bonded. ATP is bound at residue Gly125. Positions 147-149 (KDQ) are interaction with tRNA. Cys197 (cysteine persulfide intermediate) is an active-site residue.

This sequence belongs to the MnmA/TRMU family.

It is found in the cytoplasm. The enzyme catalyses S-sulfanyl-L-cysteinyl-[protein] + uridine(34) in tRNA + AH2 + ATP = 2-thiouridine(34) in tRNA + L-cysteinyl-[protein] + A + AMP + diphosphate + H(+). Its function is as follows. Catalyzes the 2-thiolation of uridine at the wobble position (U34) of tRNA, leading to the formation of s(2)U34. The polypeptide is tRNA-specific 2-thiouridylase MnmA (Cutibacterium acnes (strain DSM 16379 / KPA171202) (Propionibacterium acnes)).